The following is a 926-amino-acid chain: Nitrate reductase [NADH] (926 aa).

A disordered region spans residues 1–85 (MAASVDRQYH…SDSEEDDDEN (85 aa)). Residues 36-46 (YTFSNPPSSNG) show a composition bias toward polar residues. The span at 58–73 (DNNSNSNNGSNNNNNR) shows a compositional bias: low complexity. Mo-molybdopterin is bound at residue Cys-204. The Cytochrome b5 heme-binding domain maps to 551–626 (SKMYSMSEVK…LEDFRIGELI (76 aa)). Heme is bound by residues His-586 and His-609. Residues 670–782 (RVKIPCKLIE…KGPLGHIEYL (113 aa)) enclose the FAD-binding FR-type domain. FAD-binding positions include 722-725 (RAYT), 739-743 (VVKVY), Phe-744, Phe-751, 756-758 (VMS), and Thr-809.

This sequence belongs to the nitrate reductase family. Homodimer. Requires FAD as cofactor. It depends on heme as a cofactor. Mo-molybdopterin serves as cofactor.

The catalysed reaction is nitrite + NAD(+) + H2O = nitrate + NADH + H(+). Functionally, nitrate reductase is a key enzyme involved in the first step of nitrate assimilation in plants, fungi and bacteria. The protein is Nitrate reductase [NADH] (NIA) of Spinacia oleracea (Spinach).